Consider the following 131-residue polypeptide: Small ribosomal subunit protein uS9 (131 aa).

A disordered region spans residues 102 to 131 (AGFLTRDPRMKERRKYGLKKARKAPQFSKR). Residues 112–131 (KERRKYGLKKARKAPQFSKR) are compositionally biased toward basic residues.

It belongs to the universal ribosomal protein uS9 family.

In Desulfitobacterium hafniense (strain DSM 10664 / DCB-2), this protein is Small ribosomal subunit protein uS9.